Reading from the N-terminus, the 241-residue chain is Glycerol-3-phosphate acyltransferase (241 aa).

A run of 6 helical transmembrane segments spans residues 3–23, 63–83, 97–117, 131–151, 156–176, and 198–218; these read ILYS…LLGS, IVFA…SAIV, YISP…PAYY, LIIS…LLVV, IVSL…WMPW, and LVNY…LVLV.

Belongs to the PlsY family. In terms of assembly, probably interacts with PlsX.

It is found in the cell membrane. It catalyses the reaction an acyl phosphate + sn-glycerol 3-phosphate = a 1-acyl-sn-glycero-3-phosphate + phosphate. Its pathway is lipid metabolism; phospholipid metabolism. Its function is as follows. Catalyzes the transfer of an acyl group from acyl-phosphate (acyl-PO(4)) to glycerol-3-phosphate (G3P) to form lysophosphatidic acid (LPA). This enzyme utilizes acyl-phosphate as fatty acyl donor, but not acyl-CoA or acyl-ACP. This chain is Glycerol-3-phosphate acyltransferase, found in Mycoplasmopsis agalactiae (strain NCTC 10123 / CIP 59.7 / PG2) (Mycoplasma agalactiae).